The primary structure comprises 102 residues: MIHKLTSEERKTRLEDLPHWTAVAGRDAIQRRLRFADFNEAFGFMTRVAIKAQEMNHHPEWFNVYNRVDITLSTHDADGLTERDIELARFIDGAAAHAQPGA.

It belongs to the pterin-4-alpha-carbinolamine dehydratase family.

The enzyme catalyses (4aS,6R)-4a-hydroxy-L-erythro-5,6,7,8-tetrahydrobiopterin = (6R)-L-erythro-6,7-dihydrobiopterin + H2O. This is Putative pterin-4-alpha-carbinolamine dehydratase from Burkholderia orbicola (strain MC0-3).